Here is a 213-residue protein sequence, read N- to C-terminus: MLFKNEILRCYLIGGSQDTHHDPDEFLTKVEAAMQAGITAFQYREKGTSTLSKAETLALGQQVRELATKYGVPLFVDDDLELAAAIKADGIHVGQKDQRIEEVLAAVSDQLMVGYSCNTAAQVAHANQLNVDYIGTGPVFPTISKDDAGSALGVDGLADFVEQSAHPVVAIGGISLDNVGATLTSGCAGLSMISMVLGADDVAGTVKKILELY.

4-amino-2-methyl-5-(diphosphooxymethyl)pyrimidine is bound by residues 42–46 and Asp77; that span reads QYREK. The Mg(2+) site is built by Asp78 and Asp97. Ser116 serves as a coordination point for 4-amino-2-methyl-5-(diphosphooxymethyl)pyrimidine. 142–144 is a binding site for 2-[(2R,5Z)-2-carboxy-4-methylthiazol-5(2H)-ylidene]ethyl phosphate; the sequence is TIS. Lys145 provides a ligand contact to 4-amino-2-methyl-5-(diphosphooxymethyl)pyrimidine. Residues Gly173 and 193-194 contribute to the 2-[(2R,5Z)-2-carboxy-4-methylthiazol-5(2H)-ylidene]ethyl phosphate site; that span reads IS.

The protein belongs to the thiamine-phosphate synthase family. The cofactor is Mg(2+).

The catalysed reaction is 2-[(2R,5Z)-2-carboxy-4-methylthiazol-5(2H)-ylidene]ethyl phosphate + 4-amino-2-methyl-5-(diphosphooxymethyl)pyrimidine + 2 H(+) = thiamine phosphate + CO2 + diphosphate. It carries out the reaction 2-(2-carboxy-4-methylthiazol-5-yl)ethyl phosphate + 4-amino-2-methyl-5-(diphosphooxymethyl)pyrimidine + 2 H(+) = thiamine phosphate + CO2 + diphosphate. The enzyme catalyses 4-methyl-5-(2-phosphooxyethyl)-thiazole + 4-amino-2-methyl-5-(diphosphooxymethyl)pyrimidine + H(+) = thiamine phosphate + diphosphate. It functions in the pathway cofactor biosynthesis; thiamine diphosphate biosynthesis; thiamine phosphate from 4-amino-2-methyl-5-diphosphomethylpyrimidine and 4-methyl-5-(2-phosphoethyl)-thiazole: step 1/1. Functionally, condenses 4-methyl-5-(beta-hydroxyethyl)thiazole monophosphate (THZ-P) and 2-methyl-4-amino-5-hydroxymethyl pyrimidine pyrophosphate (HMP-PP) to form thiamine monophosphate (TMP). This is Thiamine-phosphate synthase from Limosilactobacillus fermentum (strain NBRC 3956 / LMG 18251) (Lactobacillus fermentum).